The primary structure comprises 396 residues: DnaJ homolog subfamily A member 1 (396 aa).

One can recognise a J domain in the interval 6–68 (TYYDVLGVKP…KKRELYDKGG (63 aa)). N6-acetyllysine is present on K66. Position 83 is a phosphoserine (S83). Residues 120–204 (GATRKLALQK…CNGRKIVREK (85 aa)) form a CR-type zinc finger. Positions 133, 136, 149, 152, 176, 179, 192, and 195 each coordinate Zn(2+). CXXCXGXG motif repeat units follow at residues 133–140 (CDKCEGRG), 149–156 (CPNCRGTG), 176–183 (CMECQGHG), and 192–199 (CKSCNGRK). Residue S334 is modified to Phosphoserine. The tract at residues 351-396 (VEETDEMDQVELVDFDPNQERRRHYNGEAYEDDEHHPRGGVQCQTS) is disordered. A compositionally biased stretch (acidic residues) spans 352 to 364 (EETDEMDQVELVD). Position 380 is a phosphotyrosine (Y380). Residue C393 is modified to Cysteine methyl ester. Residue C393 is the site of S-farnesyl cysteine attachment. Positions 394 to 396 (QTS) are cleaved as a propeptide — removed in mature form.

As to quaternary structure, identified in a complex with HSPA1B and BAX. Interacts with RNF207.

The protein localises to the membrane. It is found in the cytoplasm. It localises to the microsome. Its subcellular location is the mitochondrion. The protein resides in the nucleus. The protein localises to the perinuclear region. Functionally, co-chaperone for HSPA8/Hsc70. Plays a role in protein transport into mitochondria via its role as co-chaperone. Functions as co-chaperone for HSPA1B and negatively regulates the translocation of BAX from the cytosol to mitochondria in response to cellular stress, thereby protecting cells against apoptosis. Stimulates ATP hydrolysis, but not the folding of unfolded proteins mediated by HSPA1A (in vitro). Promotes apoptosis in response to cellular stress mediated by exposure to anisomycin or UV. In Pongo abelii (Sumatran orangutan), this protein is DnaJ homolog subfamily A member 1 (DNAJA1).